A 96-amino-acid polypeptide reads, in one-letter code: Large ribosomal subunit protein bL27 (96 aa).

A propeptide spanning residues 1–9 (MLRLDLQFF) is cleaved from the precursor.

It belongs to the bacterial ribosomal protein bL27 family. The N-terminus is cleaved by ribosomal processing cysteine protease Prp.

This chain is Large ribosomal subunit protein bL27, found in Geobacillus sp. (strain WCH70).